Reading from the N-terminus, the 84-residue chain is Large ribosomal subunit protein bL27 (84 aa).

The disordered stretch occupies residues 1–22 (MAHKKGASSTRNGRDSNAQRLG). A compositionally biased stretch (polar residues) spans 7–19 (ASSTRNGRDSNAQ).

The protein belongs to the bacterial ribosomal protein bL27 family.

The chain is Large ribosomal subunit protein bL27 from Streptomyces coelicolor (strain ATCC BAA-471 / A3(2) / M145).